We begin with the raw amino-acid sequence, 549 residues long: Oxygen-dependent choline dehydrogenase (549 aa).

4 to 33 lines the FAD pocket; the sequence is DYVIVGSGSAGSAIAYRLSEDGRYSVIVIE. The Proton acceptor role is filled by H465. Residues 528–549 form a disordered region; the sequence is KTPLPRSNQEPWVNPRAAVSDR.

It belongs to the GMC oxidoreductase family. The cofactor is FAD.

It catalyses the reaction choline + A = betaine aldehyde + AH2. The enzyme catalyses betaine aldehyde + NAD(+) + H2O = glycine betaine + NADH + 2 H(+). The protein operates within amine and polyamine biosynthesis; betaine biosynthesis via choline pathway; betaine aldehyde from choline (cytochrome c reductase route): step 1/1. Its function is as follows. Involved in the biosynthesis of the osmoprotectant glycine betaine. Catalyzes the oxidation of choline to betaine aldehyde and betaine aldehyde to glycine betaine at the same rate. This chain is Oxygen-dependent choline dehydrogenase, found in Agrobacterium fabrum (strain C58 / ATCC 33970) (Agrobacterium tumefaciens (strain C58)).